Here is a 36-residue protein sequence, read N- to C-terminus: Conotoxin Bt11.4 (36 aa).

Intrachain disulfides connect Cys-2-Cys-16, Cys-9-Cys-21, Cys-15-Cys-26, and Cys-20-Cys-33.

Belongs to the conotoxin I1 superfamily. As to expression, expressed by the venom duct.

It localises to the secreted. The sequence is that of Conotoxin Bt11.4 from Conus betulinus (Beech cone).